Here is a 440-residue protein sequence, read N- to C-terminus: Phosphoglucosamine mutase (440 aa).

The active-site Phosphoserine intermediate is the Ser97. Mg(2+) contacts are provided by Ser97, Asp237, Asp239, and Asp241. Phosphoserine is present on Ser97.

Belongs to the phosphohexose mutase family. It depends on Mg(2+) as a cofactor. In terms of processing, activated by phosphorylation.

It catalyses the reaction alpha-D-glucosamine 1-phosphate = D-glucosamine 6-phosphate. Catalyzes the conversion of glucosamine-6-phosphate to glucosamine-1-phosphate. The protein is Phosphoglucosamine mutase of Nautilia profundicola (strain ATCC BAA-1463 / DSM 18972 / AmH).